The primary structure comprises 38 residues: Cytochrome b6-f complex subunit 5 (38 aa).

Residues 5–25 (LVLGLVMGLVPITLAGLFVAA) form a helical membrane-spanning segment.

The protein belongs to the PetG family. The 4 large subunits of the cytochrome b6-f complex are cytochrome b6, subunit IV (17 kDa polypeptide, PetD), cytochrome f and the Rieske protein, while the 4 small subunits are PetG, PetL, PetM and PetN. The complex functions as a dimer.

The protein resides in the cellular thylakoid membrane. In terms of biological role, component of the cytochrome b6-f complex, which mediates electron transfer between photosystem II (PSII) and photosystem I (PSI), cyclic electron flow around PSI, and state transitions. PetG is required for either the stability or assembly of the cytochrome b6-f complex. In Gloeothece citriformis (strain PCC 7424) (Cyanothece sp. (strain PCC 7424)), this protein is Cytochrome b6-f complex subunit 5.